Here is a 444-residue protein sequence, read N- to C-terminus: Ribosomal protein uS12 methylthiotransferase RimO (444 aa).

The region spanning 4 to 118 is the MTTase N-terminal domain; that stretch reads YKIGLISLGC…IQNYIDDFFN (115 aa). 6 residues coordinate [4Fe-4S] cluster: C13, C48, C81, C155, C159, and C162. The region spanning 141-371 is the Radical SAM core domain; that stretch reads TTAKHMAYIR…MSIQQNVSSK (231 aa). In terms of domain architecture, TRAM spans 374–440; it reads KNKLEKVYKV…EYDLIGVVCD (67 aa).

This sequence belongs to the methylthiotransferase family. RimO subfamily. Requires [4Fe-4S] cluster as cofactor.

The protein localises to the cytoplasm. The catalysed reaction is L-aspartate(89)-[ribosomal protein uS12]-hydrogen + (sulfur carrier)-SH + AH2 + 2 S-adenosyl-L-methionine = 3-methylsulfanyl-L-aspartate(89)-[ribosomal protein uS12]-hydrogen + (sulfur carrier)-H + 5'-deoxyadenosine + L-methionine + A + S-adenosyl-L-homocysteine + 2 H(+). Catalyzes the methylthiolation of an aspartic acid residue of ribosomal protein uS12. The chain is Ribosomal protein uS12 methylthiotransferase RimO from Clostridium novyi (strain NT).